The sequence spans 1091 residues: E3 ubiquitin-protein ligase TRIM33 (1091 aa).

Over residues 1–13 the composition is skewed to gly residues; sequence MADNKGGGGGGGE. The tract at residues 1-87 is disordered; that stretch reads MADNKGGGGG…SATPASSSSS (87 aa). Low complexity predominate over residues 52-87; the sequence is APVAAVPTDTPAEENPAPSSSSVASSSATPASSSSS. An RING-type 1 zinc finger spans residues 97–154; the sequence is CAVCKLSLQSRDTEPKLLPCLHSFCRRCLPEPERQLSVPGGTNGDIQQVGVIRCLVCR. The B box-type 1; atypical zinc-finger motif lies at 180-227; that stretch reads KSEQVCTSCEDNASAVGFCVECGEWLCKTCIEAHQRVKFTKDHIITNK. 8 residues coordinate Zn(2+): cysteine 185, cysteine 188, cysteine 209, histidine 213, cysteine 245, histidine 248, cysteine 268, and histidine 273. The B box-type 2 zinc-finger motif lies at 240–281; sequence QRPVFCPVHKQEQLKLFCETCDRLTCRDCQLLEHKEHRYQFL. A coiled-coil region spans residues 269–361; it reads QLLEHKEHRY…QLESVTKERQ (93 aa). 2 disordered regions span residues 672–779 and 821–844; these read LPQP…TPPL and GKSA…GSNK. Residues 675–721 are compositionally biased toward low complexity; sequence PTSNMNPSPAPSAMSPGSTGLSNSHTPVRPPSTSSTGSRGSCGSSSR. Positions 754–763 are enriched in basic and acidic residues; sequence KQEKAEDGRR. Low complexity predominate over residues 768–779; that stretch reads LSSPESSLTPPL. The PHD-type zinc-finger motif lies at 850 to 897; the sequence is EDWCAVCQNGGDLLCCEKCPKVFHLTCHVPTLLSFPSGEWICTFCRDL. The Bromo domain occupies 920-1043; that stretch reads GLSPVDQMKC…LYFEEKLPAI (124 aa). Residues 1051 to 1091 are disordered; the sequence is PLPEFEAEDDDGDVTDDSDDDDFVQPRRKRLKSEERPVHIK. Residues 1055–1073 show a composition bias toward acidic residues; the sequence is FEAEDDDGDVTDDSDDDDF. Residues 1082 to 1091 show a composition bias toward basic and acidic residues; that stretch reads KSEERPVHIK.

May interact with smad4.

It localises to the nucleus. It carries out the reaction S-ubiquitinyl-[E2 ubiquitin-conjugating enzyme]-L-cysteine + [acceptor protein]-L-lysine = [E2 ubiquitin-conjugating enzyme]-L-cysteine + N(6)-ubiquitinyl-[acceptor protein]-L-lysine.. It functions in the pathway protein modification; protein ubiquitination. Acts as an E3 ubiquitin-protein ligase for smad4. Promotes ectoderm embryonic development at the expense of other germ layers. Inhibits mesodermal differentiation. Promotes neural development of the ectoderm. Promotes smad4 alpha degradation via the ubiquitin proteasome pathway. May act as a transcriptional repressor. This is E3 ubiquitin-protein ligase TRIM33 (trim33) from Xenopus laevis (African clawed frog).